Consider the following 462-residue polypeptide: MTKNHKLWGGRFESSLEKWVEEFGASISFDQKLAPYDMKASMAHVTMLGKTDIISQEEAGLIKDGLKILQDKYRAGQLTFSISNEDIHMNIESLLTAEIGEVAGKLHTARSRNDQVATDMHLYLKDKLQEMMKKLLHLRTTLVNLAENHIYTVMPGYTHLQHAQPISFGHHLMAYYNMFTRDTERLEFNMKHTDLSPLGAAALAGTTFPIDRHMTTRLLDFEKPYSNSLDAVSDRDFIIEFLSNASILMMHLSRFCEEIINWCSYEYQFITLSDTFSTGSSIMPQKKNPDMAELIRGKTGRVYGNLFSLLTVMKSLPLAYNKDLQEDKEGMFDSVETVSIAIEIMANMLETMTVNEHIMMTSTETDFSNATELADYLASKGIPFRKAHEIVGKLVLECSKNGSYLQDIPLKYYQEISELIENDIYEILTAKTAVKRRNSLGGTGFDQVKEQILLARKELKAE.

It belongs to the lyase 1 family. Argininosuccinate lyase subfamily.

The protein localises to the cytoplasm. The enzyme catalyses 2-(N(omega)-L-arginino)succinate = fumarate + L-arginine. Its pathway is amino-acid biosynthesis; L-arginine biosynthesis; L-arginine from L-ornithine and carbamoyl phosphate: step 3/3. The sequence is that of Argininosuccinate lyase from Streptococcus agalactiae serotype III (strain NEM316).